The chain runs to 176 residues: 3-hydroxydecanoyl-[acyl-carrier-protein] dehydratase (176 aa).

His75 is a catalytic residue.

It belongs to the thioester dehydratase family. FabA subfamily. As to quaternary structure, homodimer.

It is found in the cytoplasm. The enzyme catalyses a (3R)-hydroxyacyl-[ACP] = a (2E)-enoyl-[ACP] + H2O. It carries out the reaction (3R)-hydroxydecanoyl-[ACP] = (2E)-decenoyl-[ACP] + H2O. It catalyses the reaction (2E)-decenoyl-[ACP] = (3Z)-decenoyl-[ACP]. It participates in lipid metabolism; fatty acid biosynthesis. Necessary for the introduction of cis unsaturation into fatty acids. Catalyzes the dehydration of (3R)-3-hydroxydecanoyl-ACP to E-(2)-decenoyl-ACP and then its isomerization to Z-(3)-decenoyl-ACP. Can catalyze the dehydratase reaction for beta-hydroxyacyl-ACPs with saturated chain lengths up to 16:0, being most active on intermediate chain length. This is 3-hydroxydecanoyl-[acyl-carrier-protein] dehydratase from Actinobacillus pleuropneumoniae serotype 5b (strain L20).